Reading from the N-terminus, the 566-residue chain is Chaperonin GroEL 1 (566 aa).

ATP is bound by residues 29-32 (TIGP), 86-90 (DGTTT), glycine 413, and aspartate 492. The interval 520–540 (DKPEPPAPAGDGGGDPMGGMG) is disordered. Residues 529–540 (GDGGGDPMGGMG) are compositionally biased toward gly residues.

The protein belongs to the chaperonin (HSP60) family. In terms of assembly, forms a cylinder of 14 subunits composed of two heptameric rings stacked back-to-back. Interacts with the co-chaperonin GroES.

The protein resides in the cytoplasm. The enzyme catalyses ATP + H2O + a folded polypeptide = ADP + phosphate + an unfolded polypeptide.. Together with its co-chaperonin GroES, plays an essential role in assisting protein folding. The GroEL-GroES system forms a nano-cage that allows encapsulation of the non-native substrate proteins and provides a physical environment optimized to promote and accelerate protein folding. In Prochlorococcus marinus (strain MIT 9313), this protein is Chaperonin GroEL 1.